The primary structure comprises 176 residues: MLIHRIEIVFTSSRDAPLRVRTFLNELTYVFPNSIKINRGRQSLKDIIAKSIYLNSKYLVIIDVIKGNPGRFRVYDLTSKMLKYNFIIYGVTLLTELKLHRTLIKRGCIGKIEDQKIKNMLIDLGYIYIENCDVYANGDYIIKDNNYVFELKFTKDDKILGPVIRFQLYDRNKNIN.

One can recognise a Brix domain in the interval 6–176 (IEIVFTSSRD…QLYDRNKNIN (171 aa)).

Its function is as follows. Probably involved in the biogenesis of the ribosome. The polypeptide is Probable Brix domain-containing ribosomal biogenesis protein (Sulfurisphaera tokodaii (strain DSM 16993 / JCM 10545 / NBRC 100140 / 7) (Sulfolobus tokodaii)).